The chain runs to 150 residues: MQVLVDADACPAVIKDMLFRAARRAEICVTLVANQFLRTPPSPFIKAVQVPAGFDVADARIVELAEPGDLVITADIPLAAAVLDKGAHALDPRGNWFSRENIEERLSTRAMMDQLRSAGIDTGGPAPFSARDGKTFASQLDRFLARHGKP.

The protein belongs to the UPF0178 family.

The protein is UPF0178 protein BceJ2315_16760 of Burkholderia cenocepacia (strain ATCC BAA-245 / DSM 16553 / LMG 16656 / NCTC 13227 / J2315 / CF5610) (Burkholderia cepacia (strain J2315)).